Consider the following 454-residue polypeptide: UPF0210 protein EUBREC_1565 (454 aa).

It belongs to the UPF0210 family. As to quaternary structure, homodimer.

This Agathobacter rectalis (strain ATCC 33656 / DSM 3377 / JCM 17463 / KCTC 5835 / VPI 0990) (Eubacterium rectale) protein is UPF0210 protein EUBREC_1565.